The chain runs to 289 residues: ATP synthase gamma chain (289 aa).

It belongs to the ATPase gamma chain family. F-type ATPases have 2 components, CF(1) - the catalytic core - and CF(0) - the membrane proton channel. CF(1) has five subunits: alpha(3), beta(3), gamma(1), delta(1), epsilon(1). CF(0) has three main subunits: a, b and c.

It is found in the cell inner membrane. Its function is as follows. Produces ATP from ADP in the presence of a proton gradient across the membrane. The gamma chain is believed to be important in regulating ATPase activity and the flow of protons through the CF(0) complex. This Anaeromyxobacter dehalogenans (strain 2CP-C) protein is ATP synthase gamma chain.